The chain runs to 1105 residues: Ran-binding protein 6 (1105 aa).

N-acetylalanine is present on Ala2. 4 HEAT repeats span residues 219–257 (FKDF…TVPK), 361–399 (KVVL…GCHQ), 402–440 (ESIL…DFAP), and 444–483 (KKFH…DCPK). A ran-GTP binding region spans residues 333-383 (DEMEEDDFDSNAVAAESALDRLACGLGGKVVLPMTKEHIMQMLQSPDWKYR). The stretch at 806–842 (KAKLEGHFKNQELRQVKRQEENYDQQVEMSLQDEDEC) forms a coiled coil. 3 HEAT repeats span residues 866–905 (LPWF…HCSP), 908–946 (FKYV…FGGD), and 949–987 (RSLC…IGKI).

It belongs to the importin beta family.

The protein localises to the cytoplasm. It is found in the nucleus. Functionally, may function in nuclear protein import as nuclear transport receptor. The chain is Ran-binding protein 6 (RANBP6) from Homo sapiens (Human).